The primary structure comprises 188 residues: Small ribosomal subunit protein uS12m (188 aa).

Residues 1 to 63 (MSGGRWISNL…AAFRLPQSSG (63 aa)) constitute a mitochondrion transit peptide.

The protein belongs to the universal ribosomal protein uS12 family.

It is found in the mitochondrion. Its function is as follows. Protein S12 is involved in the translation initiation step. The sequence is that of Small ribosomal subunit protein uS12m (RPS12) from Oenothera elata subsp. hookeri (Hooker's evening primrose).